The following is a 101-amino-acid chain: UPF0235 protein MmarC6_1603 (101 aa).

Belongs to the UPF0235 family.

This is UPF0235 protein MmarC6_1603 from Methanococcus maripaludis (strain C6 / ATCC BAA-1332).